A 215-amino-acid chain; its full sequence is Tail hub protein A (215 aa).

Heterotrimer with THB. The heterotrimers further assemble as 12 docking hubs that anchor the trimeric tail fibers.

It localises to the virion. Functionally, forms the tail hub together with tail hub protein B (THB). The sequence is that of Tail hub protein A from Bacteroides phage crAss001 (Bacteroides phage PhiCrAss001).